The chain runs to 364 residues: tRNA-specific 2-thiouridylase MnmA (364 aa).

Residues 12–19 (GMSGGVDS) and M38 contribute to the ATP site. Positions 98–100 (NPD) are interaction with target base in tRNA. C103 functions as the Nucleophile in the catalytic mechanism. An intrachain disulfide couples C103 to C199. An ATP-binding site is contributed by G127. The interaction with tRNA stretch occupies residues 149–151 (KDQ). Residue C199 is the Cysteine persulfide intermediate of the active site. The interval 307–308 (RY) is interaction with tRNA.

It belongs to the MnmA/TRMU family.

The protein resides in the cytoplasm. It carries out the reaction S-sulfanyl-L-cysteinyl-[protein] + uridine(34) in tRNA + AH2 + ATP = 2-thiouridine(34) in tRNA + L-cysteinyl-[protein] + A + AMP + diphosphate + H(+). Its function is as follows. Catalyzes the 2-thiolation of uridine at the wobble position (U34) of tRNA, leading to the formation of s(2)U34. The polypeptide is tRNA-specific 2-thiouridylase MnmA (Shouchella clausii (strain KSM-K16) (Alkalihalobacillus clausii)).